The chain runs to 156 residues: Protein archease-like (156 aa).

The Ca(2+) site is built by Asp25, Asp155, and Ile156.

This sequence belongs to the archease family.

Functionally, component of the tRNA-splicing ligase complex required to facilitate the enzymatic turnover of catalytic subunit RtcB. Plays an important role in a RNA repair and splicing pathway which controls axon regeneration in response to peripheral (PNS) and central nervous system (CNS) injury, by activating splicing of Xbp1 to promote axon regeneration in response to axotomy. The protein is Protein archease-like of Drosophila melanogaster (Fruit fly).